Reading from the N-terminus, the 153-residue chain is ORM1-like protein 2 (153 aa).

Over 1 to 21 the chain is Cytoplasmic; it reads MNVGVAHSEVNPNTRVMNSRG. Transmembrane regions (helical) follow at residues 22 to 42 and 43 to 63; these read IWLA…SIPF and FSIP…TYVF. The Cytoplasmic portion of the chain corresponds to 64-105; sequence LHTVKGTPFETPDQGKARLLTHWEQMDYGLQFTSSRKFLSIS. The helical transmembrane segment at 106-126 threads the bilayer; that stretch reads PIVLYLLASFYTKYDAAHFLI. The Extracellular portion of the chain corresponds to 127-153; that stretch reads NTASLLSVLLPKLPQFHGVRVFGINKY.

This sequence belongs to the ORM family. As to quaternary structure, ceramide-sensitive subunit of the serine palmitoyltransferase (SPT) complex, which is also composed of SPTLC1, SPTLC2/3 and SPTSSA/B. Widely expressed. Expressed in adult and fetal heart, brain, lung, liver, skeletal muscle and kidney. Expressed in adult pancreas and placenta and in fetal spleen abd thymus.

The protein resides in the endoplasmic reticulum membrane. In terms of biological role, plays an essential role in the homeostatic regulation of sphingolipid de novo biosynthesis by modulating the activity of the serine palmitoyltransferase (SPT) in response to ceramide levels. When complexed to SPT, the binding of ceramides to its N-terminus stabilizes a conformation that block SPT substrate entry, hence preventing SPT catalytic activity. Through this mechanism, maintains ceramide levels at sufficient concentrations for the production of complex sphingolipids, but which prevents the accumulation of ceramides to levels that trigger apoptosis. This is ORM1-like protein 2 (ORMDL2) from Homo sapiens (Human).